A 173-amino-acid chain; its full sequence is Translation initiation factor IF-3 (173 aa).

This sequence belongs to the IF-3 family. In terms of assembly, monomer.

It is found in the cytoplasm. Functionally, IF-3 binds to the 30S ribosomal subunit and shifts the equilibrium between 70S ribosomes and their 50S and 30S subunits in favor of the free subunits, thus enhancing the availability of 30S subunits on which protein synthesis initiation begins. This chain is Translation initiation factor IF-3, found in Methylorubrum extorquens (strain CM4 / NCIMB 13688) (Methylobacterium extorquens).